Consider the following 493-residue polypeptide: Glycerol kinase (493 aa).

An ADP-binding site is contributed by Thr-11. Residues Thr-11, Thr-12, and Ser-13 each contribute to the ATP site. Thr-11 lines the sn-glycerol 3-phosphate pocket. Arg-15 provides a ligand contact to ADP. Sn-glycerol 3-phosphate-binding residues include Arg-80, Glu-81, Tyr-132, and Asp-241. Glycerol-binding residues include Arg-80, Glu-81, Tyr-132, Asp-241, and Gln-242. Thr-263 and Gly-306 together coordinate ADP. ATP contacts are provided by Thr-263, Gly-306, Gln-310, and Gly-408. ADP is bound at residue Gly-408.

The protein belongs to the FGGY kinase family.

It carries out the reaction glycerol + ATP = sn-glycerol 3-phosphate + ADP + H(+). The protein operates within polyol metabolism; glycerol degradation via glycerol kinase pathway; sn-glycerol 3-phosphate from glycerol: step 1/1. Inhibited by fructose 1,6-bisphosphate (FBP). Key enzyme in the regulation of glycerol uptake and metabolism. Catalyzes the phosphorylation of glycerol to yield sn-glycerol 3-phosphate. This chain is Glycerol kinase, found in Cereibacter sphaeroides (strain ATCC 17029 / ATH 2.4.9) (Rhodobacter sphaeroides).